Consider the following 348-residue polypeptide: UDP-N-acetylglucosamine--N-acetylmuramyl-(pentapeptide) pyrophosphoryl-undecaprenol N-acetylglucosamine transferase (348 aa).

Residues 11–13, N120, R161, S187, and Q281 each bind UDP-N-acetyl-alpha-D-glucosamine; that span reads TGG.

The protein belongs to the glycosyltransferase 28 family. MurG subfamily.

Its subcellular location is the cell inner membrane. The enzyme catalyses di-trans,octa-cis-undecaprenyl diphospho-N-acetyl-alpha-D-muramoyl-L-alanyl-D-glutamyl-meso-2,6-diaminopimeloyl-D-alanyl-D-alanine + UDP-N-acetyl-alpha-D-glucosamine = di-trans,octa-cis-undecaprenyl diphospho-[N-acetyl-alpha-D-glucosaminyl-(1-&gt;4)]-N-acetyl-alpha-D-muramoyl-L-alanyl-D-glutamyl-meso-2,6-diaminopimeloyl-D-alanyl-D-alanine + UDP + H(+). The protein operates within cell wall biogenesis; peptidoglycan biosynthesis. In terms of biological role, cell wall formation. Catalyzes the transfer of a GlcNAc subunit on undecaprenyl-pyrophosphoryl-MurNAc-pentapeptide (lipid intermediate I) to form undecaprenyl-pyrophosphoryl-MurNAc-(pentapeptide)GlcNAc (lipid intermediate II). The protein is UDP-N-acetylglucosamine--N-acetylmuramyl-(pentapeptide) pyrophosphoryl-undecaprenol N-acetylglucosamine transferase of Crocosphaera subtropica (strain ATCC 51142 / BH68) (Cyanothece sp. (strain ATCC 51142)).